Consider the following 77-residue polypeptide: Neurotoxin LmNaTx21.1 (77 aa).

Residues 1 to 7 (LILVACL) form the signal peptide. The 61-residue stretch at 16–76 (KDGYPVDWNN…VEIKGYGRCR (61 aa)) folds into the LCN-type CS-alpha/beta domain. 4 cysteine pairs are disulfide-bonded: Cys-26-Cys-75, Cys-30-Cys-51, Cys-37-Cys-58, and Cys-41-Cys-60.

This sequence belongs to the long (4 C-C) scorpion toxin superfamily. Sodium channel inhibitor family. Alpha subfamily. In terms of tissue distribution, expressed by the venom gland.

The protein resides in the secreted. In terms of biological role, binds voltage-independently at site-3 of voltage-gated sodium channels (Nav) and inhibits the inactivation of the activated channels, thereby blocking neuronal transmission. The sequence is that of Neurotoxin LmNaTx21.1 from Lychas mucronatus (Chinese swimming scorpion).